The sequence spans 357 residues: SUN domain-containing protein 3 (357 aa).

The Nuclear segment spans residues 1 to 47; it reads MSGKTKARRAAMFFRRCSEDASGSASGNALLSEDENPDANGVTRSWK. A helical transmembrane segment spans residues 48–64; the sequence is IILSTMLTLTFLLVGLL. Topologically, residues 65-357 are perinuclear space; the sequence is NHQWLKETDV…RVHGTPGKHI (293 aa). The stretch at 98–146 forms a coiled coil; it reads RLRMPKEQLELLKKESQNLENNFRQILFLIEQIDVLKALLRDMKDGMDN. The 162-residue stretch at 193 to 354 folds into the SUN domain; it reads GASIIEAGTS…YRFRVHGTPG (162 aa).

Self-associates. Interacts with SYNE1 and SPAG4/SUN4. Proposed to form a spermatogenesis-specific LINC complex with SYNE1 during sperm head formation possibly implicating a SUN domain-based heterotrimer with SPAG4/SUN4 associating with SYNE1.

It localises to the membrane. Its subcellular location is the nucleus envelope. The protein localises to the nucleus inner membrane. Functionally, as a probable component of the LINC (LInker of Nucleoskeleton and Cytoskeleton) complex, involved in the connection between the nuclear lamina and the cytoskeleton. The nucleocytoplasmic interactions established by the LINC complex play an important role in the transmission of mechanical forces across the nuclear envelope and in nuclear movement and positioning. May be involved in nuclear remodeling during sperm head formation in spermatogenesis. A probable SUN3:SYNE1 LINC complex may tether spermatid nuclei to posterior cytoskeletal structures such as the manchette. This chain is SUN domain-containing protein 3 (SUN3), found in Homo sapiens (Human).